Consider the following 491-residue polypeptide: Dipeptide and tripeptide permease B (491 aa).

Residues 1-26 are Cytoplasmic-facing; sequence MNNTAPGLLHQPKPFFMIFFVELWER. A helical transmembrane segment spans residues 27-47; that stretch reads FGYYGVQGILAVFFVKQLGFS. Residues 48–51 lie on the Periplasmic side of the membrane; that stretch reads QEQA. A helical membrane pass occupies residues 52–72; that stretch reads FITFGAFAALVYGLISIGGYV. Residues 73–81 lie on the Cytoplasmic side of the membrane; sequence GDHLLGTKR. Residues 82-102 traverse the membrane as a helical segment; that stretch reads TMVLGAIVLALGYFMTGMSLL. The Periplasmic segment spans residues 103–105; the sequence is KPE. The chain crosses the membrane as a helical span at residues 106-126; it reads MIFIALGTIAVGNGLFKANPA. At 127–145 the chain is on the cytoplasmic side; sequence SLLSKCYPPKDPRLDGAFT. Residues 146–166 form a helical membrane-spanning segment; that stretch reads LFYMSINIGSLLSLSLAPIIA. The Periplasmic portion of the chain corresponds to 167 to 171; it reads ERFGY. Residues 172–192 form a helical membrane-spanning segment; the sequence is AVTYNLCGLGLIIALLVYFAC. Residues 193–210 lie on the Cytoplasmic side of the membrane; it reads RGMVRSIGSAPDHQPLNY. Residues 211–231 form a helical membrane-spanning segment; sequence GKLLLVLAGAVVMIFLCAWLM. H232 is a topological domain (periplasmic). The helical transmembrane segment at 233–253 threads the bilayer; that stretch reads NVGVANIVLIAVSAVVLYFFF. Residues 254–266 are Cytoplasmic-facing; the sequence is REAFKQDKTGRNR. The helical transmembrane segment at 267 to 287 threads the bilayer; that stretch reads MFVAFILMIEAVLFYILYAQM. Topologically, residues 288–312 are periplasmic; that stretch reads PTSLNFFAINNVRHELLGFAINPVS. A helical membrane pass occupies residues 313 to 335; it reads FQALNPFWVVVASPILASIYTRL. Topologically, residues 336 to 349 are cytoplasmic; the sequence is GSRGRDMTMPTKFT. Residues 350–370 form a helical membrane-spanning segment; the sequence is LGMLLCSLGFLTAAAAGMWFA. The Periplasmic portion of the chain corresponds to 371-378; that stretch reads DAQGLTSP. Residues 379-399 traverse the membrane as a helical segment; that stretch reads WFVVLVYLFQSLGELMISALG. Topologically, residues 400–423 are cytoplasmic; it reads LAMVAALVPQYLMGFILGMWFLTQ. Residues 424 to 444 form a helical membrane-spanning segment; the sequence is AAAFLLGGYVATFTAVPAGIH. Topologically, residues 445–454 are periplasmic; sequence DPLQTLPIYT. Residues 455-475 traverse the membrane as a helical segment; that stretch reads GVFGKIGIATLIVTLVMAAMV. Residues 476–491 are Cytoplasmic-facing; that stretch reads PWLNRMMNTPADGQKA.

Belongs to the major facilitator superfamily. Proton-dependent oligopeptide transporter (POT/PTR) (TC 2.A.17) family. DtpB subfamily.

The protein localises to the cell inner membrane. In terms of biological role, proton-dependent permease that transports di- and tripeptides. In Edwardsiella piscicida, this protein is Dipeptide and tripeptide permease B.